A 228-amino-acid polypeptide reads, in one-letter code: 2-hydroxy-3-keto-5-methylthiopentenyl-1-phosphate phosphatase (228 aa).

The protein belongs to the HAD-like hydrolase superfamily. MtnX family.

The enzyme catalyses 2-hydroxy-5-methylsulfanyl-3-oxopent-1-enyl phosphate + H2O = 1,2-dihydroxy-5-(methylsulfanyl)pent-1-en-3-one + phosphate. Its pathway is amino-acid biosynthesis; L-methionine biosynthesis via salvage pathway; L-methionine from S-methyl-5-thio-alpha-D-ribose 1-phosphate: step 4/6. Dephosphorylates 2-hydroxy-3-keto-5-methylthiopentenyl-1-phosphate (HK-MTPenyl-1-P) yielding 1,2-dihydroxy-3-keto-5-methylthiopentene (DHK-MTPene). The protein is 2-hydroxy-3-keto-5-methylthiopentenyl-1-phosphate phosphatase of Lysinibacillus sphaericus (strain C3-41).